An 831-amino-acid polypeptide reads, in one-letter code: MTVTRRDFVRHQALATAAAAAGVAVPAAATNIVTTAADNKLVWSKAPCRFCGTGCSVNVATKEGRVVATHGDIKSPVNRGLNCVKGYFLSKVMYGEDRLTQPLLRKKNGVYAKDGEFEPVTWEEAFTIMAEKFKKTLKEKGPEGIGMFGSGQWTVWEGYAASKLMKAGFRSNNIDPNARHCMASAVGGFMRTFGIDEPMGCYDDFEHADAFVLWGSNMAEMHPILWTRIADRRLSYPHVQVAVMSTYEHRSFDLADLGVVFTPQSDLAIANFIANYIIQNKKVNWDFVKKHTNFRVGTTDIGYGLRPEHPLQKAAKNADSAGASEPIDFETYAKFVADYTVEKASEISGVSEDKLIKLAKLYADPNIKVMSLWTMGVNQHTRGVWMNNLIYNIHLLTGKISEPGNSPFSLTGQPSACGTAREVGTFSHRLPADMVVTNPKHRAYAEKIWKLPEGSIPEKVGAHAVLQSRKLKDGEINAYWVQVNNNVQAGPNINEEVLPGYRNPQNFIVVSDAYPTVTAQAADLILPSAMWVEKEGAYGNAERRTQFWHQLVNAPGDARSDLWQLVEFSKYFKVEEVWPADLIAKMPEAKGKTLFDILYKNGKVNKFPLAQVSKDYENKEADAFGFYIQKGLFEEYAEFGRGHGHDLADFDRYHEERGLRWPVVNGEETLWRYREGSDPYVEKGKGVQFYGKPDGKAIIFALPYEPPAESPNKEYPFWLCTGRVIEHWHSGSMTQRVPELYKAFPDAVCFMHPEDARSAGLRRGDKVKLQSIRGHIITRIETRGRNKPPKGLVFVPWFDARQLINKVTLDATDPISKQTDFKKCAVKVERV.

Residues 1–29 constitute a signal peptide (tat-type signal); that stretch reads MTVTRRDFVRHQALATAAAAAGVAVPAAA. One can recognise a 4Fe-4S Mo/W bis-MGD-type domain in the interval 41–97; it reads LVWSKAPCRFCGTGCSVNVATKEGRVVATHGDIKSPVNRGLNCVKGYFLSKVMYGED. [4Fe-4S] cluster contacts are provided by Cys-48, Cys-51, Cys-55, and Cys-83. Residues Lys-85, Gln-152, Asn-177, Cys-181, 214–221, 245–249, 264–266, Met-375, Gln-379, Asn-485, 511–512, Lys-534, Asp-561, and 721–730 each bind Mo-bis(molybdopterin guanine dinucleotide); these read WGSNMAEM, STYEH, QSD, SD, and TGRVIEHWHS. Residue Trp-797 coordinates substrate. Mo-bis(molybdopterin guanine dinucleotide) contacts are provided by Asn-805 and Lys-822.

Belongs to the prokaryotic molybdopterin-containing oxidoreductase family. NasA/NapA/NarB subfamily. In terms of assembly, component of the periplasmic nitrate reductase NapAB complex composed of NapA and NapB. It depends on [4Fe-4S] cluster as a cofactor. Mo-bis(molybdopterin guanine dinucleotide) serves as cofactor. Post-translationally, predicted to be exported by the Tat system. The position of the signal peptide cleavage has not been experimentally proven.

The protein localises to the periplasm. It carries out the reaction 2 Fe(II)-[cytochrome] + nitrate + 2 H(+) = 2 Fe(III)-[cytochrome] + nitrite + H2O. Functionally, catalytic subunit of the periplasmic nitrate reductase complex NapAB. Receives electrons from NapB and catalyzes the reduction of nitrate to nitrite. In Saccharophagus degradans (strain 2-40 / ATCC 43961 / DSM 17024), this protein is Periplasmic nitrate reductase.